A 379-amino-acid polypeptide reads, in one-letter code: Probable malonyl-CoA-acyl carrier protein transacylase, mitochondrial (379 aa).

Residues 1–23 constitute a mitochondrion transit peptide; the sequence is MLAARRLLRSPRITGALSWSRWS. Residues Ser-158 and His-275 contribute to the active site.

The protein belongs to the type II malonyltransferase family.

The protein localises to the mitochondrion. It catalyses the reaction holo-[ACP] + malonyl-CoA = malonyl-[ACP] + CoA. The protein operates within lipid metabolism; fatty acid biosynthesis. Catalyzes the transfer of a malonyl moiety from malonyl-CoA to the free thiol group of the phosphopantetheine arm of the ACP protein. This suggests the existence of the biosynthesis of fatty acids in mitochondria. The protein is Probable malonyl-CoA-acyl carrier protein transacylase, mitochondrial of Drosophila melanogaster (Fruit fly).